Here is a 229-residue protein sequence, read N- to C-terminus: Urease accessory protein UreF (229 aa).

This sequence belongs to the UreF family. In terms of assembly, ureD, UreF and UreG form a complex that acts as a GTP-hydrolysis-dependent molecular chaperone, activating the urease apoprotein by helping to assemble the nickel containing metallocenter of UreC. The UreE protein probably delivers the nickel.

It localises to the cytoplasm. Its function is as follows. Required for maturation of urease via the functional incorporation of the urease nickel metallocenter. This is Urease accessory protein UreF from Staphylococcus aureus (strain JH1).